A 485-amino-acid polypeptide reads, in one-letter code: Delta(14)-sterol reductase ERG24A (485 aa).

The next 4 membrane-spanning stretches (helical) occupy residues 18–38 (FFGP…VYVF), 77–97 (GLVS…SLIL), 131–151 (LAVL…WTFM), and 155–175 (FIQI…FVYV). Asn-240 carries N-linked (GlcNAc...) asparagine glycosylation. 4 consecutive transmembrane segments (helical) span residues 259–279 (ILIT…EPAI), 285–305 (ITTD…VPYV), 319–339 (SLGP…FYIF), and 431–451 (AQGW…ILLI).

This sequence belongs to the ERG4/ERG24 family.

The protein resides in the endoplasmic reticulum membrane. The catalysed reaction is 4,4-dimethyl-5alpha-cholesta-8,24-dien-3beta-ol + NADP(+) = 4,4-dimethyl-5alpha-cholesta-8,14,24-trien-3beta-ol + NADPH + H(+). It functions in the pathway steroid metabolism; ergosterol biosynthesis. Its function is as follows. Delta(14)-sterol reductase; part of the third module of ergosterol biosynthesis pathway that includes the late steps of the pathway. Catalyzes the reduction of the C14=C15 double bond within 4,4,24-trimethyl ergosta-8,14,24(28)-trienolto produce 4,4-dimethylfecosterol. The third module or late pathway involves the ergosterol synthesis itself through consecutive reactions that mainly occur in the endoplasmic reticulum (ER) membrane. Firstly, the squalene synthase ERG9 catalyzes the condensation of 2 farnesyl pyrophosphate moieties to form squalene, which is the precursor of all steroids. Squalene synthase is crucial for balancing the incorporation of farnesyl diphosphate (FPP) into sterol and nonsterol isoprene synthesis. Secondly, squalene is converted into lanosterol by the consecutive action of the squalene epoxidase ERG1 and the lanosterol synthase ERG7. Then, the delta(24)-sterol C-methyltransferase ERG6 methylates lanosterol at C-24 to produce eburicol. Eburicol is the substrate of the sterol 14-alpha demethylase encoded by CYP51A, CYP51B and CYP51C, to yield 4,4,24-trimethyl ergosta-8,14,24(28)-trienol. CYP51B encodes the enzyme primarily responsible for sterol 14-alpha-demethylation, and plays an essential role in ascospore formation. CYP51A encodes an additional sterol 14-alpha-demethylase, induced on ergosterol depletion and responsible for the intrinsic variation in azole sensitivity. The third CYP51 isoform, CYP51C, does not encode a sterol 14-alpha-demethylase, but is required for full virulence on host wheat ears. The C-14 reductase ERG24 then reduces the C14=C15 double bond which leads to 4,4-dimethylfecosterol. A sequence of further demethylations at C-4, involving the C-4 demethylation complex containing the C-4 methylsterol oxidases ERG25, the sterol-4-alpha-carboxylate 3-dehydrogenase ERG26 and the 3-keto-steroid reductase ERG27, leads to the production of fecosterol via 4-methylfecosterol. ERG28 has a role as a scaffold to help anchor ERG25, ERG26 and ERG27 to the endoplasmic reticulum. The C-8 sterol isomerase ERG2 then catalyzes the reaction which results in unsaturation at C-7 in the B ring of sterols and thus converts fecosterol to episterol. The sterol-C5-desaturases ERG3A and ERG3BB then catalyze the introduction of a C-5 double bond in the B ring to produce 5-dehydroepisterol. The C-22 sterol desaturases ERG5A and ERG5B further convert 5-dehydroepisterol into ergosta-5,7,22,24(28)-tetraen-3beta-ol by forming the C-22(23) double bond in the sterol side chain. Finally, ergosta-5,7,22,24(28)-tetraen-3beta-ol is substrate of the C-24(28) sterol reductase ERG4 to produce ergosterol. The chain is Delta(14)-sterol reductase ERG24A from Gibberella zeae (strain ATCC MYA-4620 / CBS 123657 / FGSC 9075 / NRRL 31084 / PH-1) (Wheat head blight fungus).